Reading from the N-terminus, the 539-residue chain is Propionyl-CoA carboxylase beta chain, mitochondrial (539 aa).

The N-terminal 28 residues, 1-28 (MAAALRVAAVGARLSVLASGLRAAVRSL), are a transit peptide targeting the mitochondrion. The CoA carboxyltransferase N-terminal domain occupies 32-290 (ATSVNERIEN…SSQDPAPVRE (259 aa)). The interval 32 to 533 (ATSVNERIEN…SKKVQRPWRK (502 aa)) is carboxyltransferase. The residue at position 71 (Ser71) is a Phosphoserine. Residue Lys99 is modified to N6-acetyllysine; alternate. Lys99 carries the post-translational modification N6-succinyllysine; alternate. Lys248 is modified (N6-succinyllysine). Residues 294–533 (PSDRLVPELD…SKKVQRPWRK (240 aa)) enclose the CoA carboxyltransferase C-terminal domain. Residues 325-358 (DEREFFEIMPNYAKNIIVGFARMNGRTVGIVGNQ) form an acyl-CoA binding region. An N6-acetyllysine; alternate mark is found at Lys474 and Lys489. Lys474 and Lys489 each carry N6-succinyllysine; alternate.

Belongs to the AccD/PCCB family. As to quaternary structure, the holoenzyme is a dodecamer composed of 6 PCCA/alpha subunits and 6 PCCB/beta subunits.

It is found in the mitochondrion matrix. It catalyses the reaction propanoyl-CoA + hydrogencarbonate + ATP = (S)-methylmalonyl-CoA + ADP + phosphate + H(+). The enzyme catalyses butanoyl-CoA + hydrogencarbonate + ATP = (2S)-ethylmalonyl-CoA + ADP + phosphate + H(+). It functions in the pathway metabolic intermediate metabolism; propanoyl-CoA degradation; succinyl-CoA from propanoyl-CoA: step 1/3. This is one of the 2 subunits of the biotin-dependent propionyl-CoA carboxylase (PCC), a mitochondrial enzyme involved in the catabolism of odd chain fatty acids, branched-chain amino acids isoleucine, threonine, methionine, and valine and other metabolites. Propionyl-CoA carboxylase catalyzes the carboxylation of propionyl-CoA/propanoyl-CoA to D-methylmalonyl-CoA/(S)-methylmalonyl-CoA. Within the holoenzyme, the alpha subunit catalyzes the ATP-dependent carboxylation of the biotin carried by the biotin carboxyl carrier (BCC) domain, while the beta subunit then transfers the carboxyl group from carboxylated biotin to propionyl-CoA. Propionyl-CoA carboxylase also significantly acts on butyryl-CoA/butanoyl-CoA, which is converted to ethylmalonyl-CoA/(2S)-ethylmalonyl-CoA at a much lower rate. Other alternative minor substrates include (2E)-butenoyl-CoA/crotonoyl-CoA. The polypeptide is Propionyl-CoA carboxylase beta chain, mitochondrial (Homo sapiens (Human)).